We begin with the raw amino-acid sequence, 249 residues long: MKKNIIAGCLFSLFSLSALAAIPAGNDATTKPDLYYLKNEQAIDSLKLLPPPPEVGSIQFLNDQAMYEKGRMLRNTERGKQAQADADLAAGGVATAFSGAFGYPITEKDSPELYKLLTNMIEDAGDLATRSAKEHYMRIRPFAFYGTETCNTKDQKKLSTNGSYPSGHTSIGWATALVLAEVNPANQDAILERGYQLGQSRVICGYHWQSDVDAARIVGSAAVATLHSDPAFQAQLAKAKQEFAQKSQK.

The first 20 residues, M1 to A20, serve as a signal peptide directing secretion.

It belongs to the class A bacterial acid phosphatase family. In terms of assembly, homotetramer.

The protein resides in the periplasm. It catalyses the reaction a phosphate monoester + H2O = an alcohol + phosphate. The chain is Major phosphate-irrepressible acid phosphatase (phoC) from Morganella morganii (Proteus morganii).